The primary structure comprises 424 residues: Cysteate synthase (424 aa).

Residue K106 is modified to N6-(pyridoxal phosphate)lysine. The pyridoxal 5'-phosphate site is built by N132 and T381.

Belongs to the threonine synthase family. Cysteate synthase subfamily. Homotrimer. Pyridoxal 5'-phosphate is required as a cofactor.

The enzyme catalyses O-phospho-L-serine + sulfite + H(+) = L-cysteate + phosphate. Its pathway is cofactor biosynthesis; coenzyme M biosynthesis. Specifically catalyzes the beta-elimination of phosphate from L-phosphoserine and the beta-addition of sulfite to the dehydroalanine intermediate to produce L-cysteate. This chain is Cysteate synthase, found in Methanoregula boonei (strain DSM 21154 / JCM 14090 / 6A8).